The sequence spans 448 residues: Exodeoxyribonuclease 7 large subunit (448 aa).

It belongs to the XseA family. In terms of assembly, heterooligomer composed of large and small subunits.

It is found in the cytoplasm. The catalysed reaction is Exonucleolytic cleavage in either 5'- to 3'- or 3'- to 5'-direction to yield nucleoside 5'-phosphates.. In terms of biological role, bidirectionally degrades single-stranded DNA into large acid-insoluble oligonucleotides, which are then degraded further into small acid-soluble oligonucleotides. This is Exodeoxyribonuclease 7 large subunit from Shewanella baltica (strain OS195).